The chain runs to 164 residues: Kunitz-type proteinase inhibitor BbCI (164 aa).

The protein belongs to the protease inhibitor I3 (leguminous Kunitz-type inhibitor) family.

The protein resides in the secreted. Inhibits T.cruzi cruzipain. The sequence is that of Kunitz-type proteinase inhibitor BbCI from Bauhinia bauhinioides (Perlebia bauhinoides).